The chain runs to 254 residues: 3-deoxy-manno-octulosonate cytidylyltransferase (254 aa).

Belongs to the KdsB family.

It is found in the cytoplasm. The enzyme catalyses 3-deoxy-alpha-D-manno-oct-2-ulosonate + CTP = CMP-3-deoxy-beta-D-manno-octulosonate + diphosphate. It functions in the pathway nucleotide-sugar biosynthesis; CMP-3-deoxy-D-manno-octulosonate biosynthesis; CMP-3-deoxy-D-manno-octulosonate from 3-deoxy-D-manno-octulosonate and CTP: step 1/1. The protein operates within bacterial outer membrane biogenesis; lipopolysaccharide biosynthesis. In terms of biological role, activates KDO (a required 8-carbon sugar) for incorporation into bacterial lipopolysaccharide in Gram-negative bacteria. This Bordetella parapertussis (strain 12822 / ATCC BAA-587 / NCTC 13253) protein is 3-deoxy-manno-octulosonate cytidylyltransferase.